The sequence spans 881 residues: Valine--tRNA ligase (881 aa).

Residues 49–59 (PNVTGKLHLGH) carry the 'HIGH' region motif. Residues 526-530 (KMSKS) carry the 'KMSKS' region motif. Position 529 (K529) interacts with ATP. Residues 810-881 (LADLINLDEE…VRQRLADLEK (72 aa)) are a coiled coil.

The protein belongs to the class-I aminoacyl-tRNA synthetase family. ValS type 1 subfamily. As to quaternary structure, monomer.

The protein resides in the cytoplasm. It carries out the reaction tRNA(Val) + L-valine + ATP = L-valyl-tRNA(Val) + AMP + diphosphate. Catalyzes the attachment of valine to tRNA(Val). As ValRS can inadvertently accommodate and process structurally similar amino acids such as threonine, to avoid such errors, it has a 'posttransfer' editing activity that hydrolyzes mischarged Thr-tRNA(Val) in a tRNA-dependent manner. This is Valine--tRNA ligase from Bacillus anthracis.